The primary structure comprises 1733 residues: Polyketide synthase Pks13 (1733 aa).

Positions 17–95 (ELTVPEMRQW…SLATRIIEGE (79 aa)) constitute a Carrier 1 domain. The residue at position 55 (serine 55) is an O-(pantetheine 4'-phosphoryl)serine. Residues 116 to 541 (RVDIAIVGLS…GANAHVVVRE (426 aa)) enclose the Ketosynthase family 3 (KS3) domain. The active-site Acyl-thioester intermediate; for beta-ketoacyl synthase activity is the cysteine 287. Residues histidine 423 and histidine 463 each act as for beta-ketoacyl synthase activity in the active site. The segment covering 548-560 (VEKEPEPEPEPKA) has biased composition (basic and acidic residues). The disordered stretch occupies residues 548-567 (VEKEPEPEPEPKAAAEPAEA). Residues 713–1034 (VWVLAGFGAQ…MVSTMAQLYV (322 aa)) are acyltransferase. The Acyl-ester intermediate; for acyltransferase activity role is filled by serine 801. The region spanning 1232–1309 (ETIAERLGLI…KLIEYAVEHR (78 aa)) is the Carrier 2 domain. Serine 1266 carries the O-(pantetheine 4'-phosphoryl)serine modification. The interval 1344–1368 (PVDSEAGVALPSPQNGEQPNPTGPA) is disordered. The tract at residues 1470-1563 (PVFVFHPAGG…RFVGLIDAVR (94 aa)) is thioesterase-like. The For thioesterase-like activity role is filled by serine 1533.

4'-phosphopantetheine is transferred from CoA to specific serines of apo-Pks13 by PptT.

The protein operates within lipid metabolism; mycolic acid biosynthesis. With respect to regulation, the presence of FadD32 is necessary for the transfer of the acyl chain from the AMP carrier onto Pks13. Its function is as follows. Involved in the biosynthesis of mycolic acids. Forms, with FadD32, the initiation module of the mycolic condensation system. Synthesizes, in coupled reaction with FadD32, the biosynthetic precursors of mycolic acids, alpha-alkyl beta-ketoacids, via the condensation of two long chain fatty acid derivatives, a very long meromycoloyl-AMP and a shorter 2-carboxyacyl-CoA. The acyl chain of the acyl-AMP produced by FadD32 is specifically transferred onto the N-terminal ACP domain of Pks13, and then transferred onto the KS domain. The extender unit carboxyacyl-CoA is specifically loaded onto the AT domain, which catalyzes the covalent attachment of the carboxyacyl chain to its active site, and its subsequent transfer onto the P-pant arm of the C-terminal ACP domain. The KS domain catalyzes the condensation between the two loaded fatty acyl chains to produce an alpha-alkyl beta-ketothioester linked to the C-ACP domain. Then, the thioesterase-like domain acts as a transacylase and is responsible for both the release and the transfer of the alpha-alkyl beta-ketoacyl chain onto a polyol acceptor molecule, particularly trehalose, leading to the formation of the trehalose monomycolate precursor. This Mycobacterium tuberculosis (strain ATCC 25618 / H37Rv) protein is Polyketide synthase Pks13.